Here is a 326-residue protein sequence, read N- to C-terminus: Vitamin B12 import system permease protein BtuC (326 aa).

9 consecutive transmembrane segments (helical) span residues Trp-15 to Glu-35, Leu-61 to Phe-81, Pro-88 to Gly-108, Leu-112 to Leu-132, Leu-146 to Phe-166, Gly-184 to Ile-204, Gly-240 to Ile-260, Val-274 to Ala-294, and Glu-302 to Leu-322.

This sequence belongs to the binding-protein-dependent transport system permease family. FecCD subfamily. In terms of assembly, the complex is composed of two ATP-binding proteins (BtuD), two transmembrane proteins (BtuC) and a solute-binding protein (BtuF).

It is found in the cell inner membrane. Part of the ABC transporter complex BtuCDF involved in vitamin B12 import. Involved in the translocation of the substrate across the membrane. The polypeptide is Vitamin B12 import system permease protein BtuC (Shigella sonnei (strain Ss046)).